Reading from the N-terminus, the 191-residue chain is Adenylate kinase (191 aa).

A10 to T15 is a binding site for ATP. The tract at residues S30 to V59 is NMP. AMP contacts are provided by residues T31, R36, E57–V59, G85–R88, and Q92. Residues K126–D136 form an LID region. R127 is a binding site for ATP. 2 residues coordinate AMP: R133 and R144. Residue G172 participates in ATP binding.

The protein belongs to the adenylate kinase family. Monomer.

The protein localises to the cytoplasm. It catalyses the reaction AMP + ATP = 2 ADP. Its pathway is purine metabolism; AMP biosynthesis via salvage pathway; AMP from ADP: step 1/1. Catalyzes the reversible transfer of the terminal phosphate group between ATP and AMP. Plays an important role in cellular energy homeostasis and in adenine nucleotide metabolism. This chain is Adenylate kinase, found in Caulobacter vibrioides (strain ATCC 19089 / CIP 103742 / CB 15) (Caulobacter crescentus).